The following is a 473-amino-acid chain: Zinc finger and SCAN domain-containing protein 21 (473 aa).

A Glycyl lysine isopeptide (Lys-Gly) (interchain with G-Cter in SUMO2) cross-link involves residue Lys27. The SCAN box domain maps to 45 to 127 (RQRFRQFGYH…TLLEDLEREL (83 aa)). The tract at residues 127–169 (LDEPGHQVSTPPNEQKPVWEKISSSGTAKESPSSMQPQPLETS) is disordered. Residues 148–167 (ISSSGTAKESPSSMQPQPLE) show a composition bias toward polar residues. Residues Lys221 and Lys232 each participate in a glycyl lysine isopeptide (Lys-Gly) (interchain with G-Cter in SUMO2) cross-link. The segment at 244–272 (LENEKGTKPPLQEAGSKKGRESVPTKPTP) is disordered. Residues 258-272 (GSKKGRESVPTKPTP) are compositionally biased toward basic and acidic residues. 7 C2H2-type zinc fingers span residues 277–299 (YICA…RRTH), 305–327 (YVCT…YRTH), 333–354 (YDCK…QRMH), 360–382 (YQCK…YRIH), 388–410 (YQCN…QRLH), 416–438 (YKCK…HRIH), and 444–466 (YWCH…QRVH). A Glycyl lysine isopeptide (Lys-Gly) (interchain with G-Cter in SUMO2) cross-link involves residue Lys349.

It belongs to the krueppel C2H2-type zinc-finger protein family.

The protein resides in the nucleus. Functionally, strong transcriptional activator. Plays an important role in spermatogenesis; essential for the progression of meiotic prophase I in spermatocytes. This chain is Zinc finger and SCAN domain-containing protein 21 (ZSCAN21), found in Homo sapiens (Human).